The primary structure comprises 465 residues: Soluble pyridine nucleotide transhydrogenase (465 aa).

Residue 35–44 (ERYNNVGGGC) coordinates FAD.

It belongs to the class-I pyridine nucleotide-disulfide oxidoreductase family. It depends on FAD as a cofactor.

It localises to the cytoplasm. It carries out the reaction NAD(+) + NADPH = NADH + NADP(+). Conversion of NADPH, generated by peripheral catabolic pathways, to NADH, which can enter the respiratory chain for energy generation. This is Soluble pyridine nucleotide transhydrogenase from Photorhabdus laumondii subsp. laumondii (strain DSM 15139 / CIP 105565 / TT01) (Photorhabdus luminescens subsp. laumondii).